A 214-amino-acid chain; its full sequence is Octanoyltransferase (214 aa).

Positions 35–211 constitute a BPL/LPL catalytic domain; sequence KSNMNFIWLG…IIHEEFNFNF (177 aa). Substrate contacts are provided by residues 75–82, 142–144, and 155–157; these read RGGEVTCH, SIG, and GFS. The Acyl-thioester intermediate role is filled by cysteine 173.

It belongs to the LipB family.

It localises to the cytoplasm. The enzyme catalyses octanoyl-[ACP] + L-lysyl-[protein] = N(6)-octanoyl-L-lysyl-[protein] + holo-[ACP] + H(+). The protein operates within protein modification; protein lipoylation via endogenous pathway; protein N(6)-(lipoyl)lysine from octanoyl-[acyl-carrier-protein]: step 1/2. Functionally, catalyzes the transfer of endogenously produced octanoic acid from octanoyl-acyl-carrier-protein onto the lipoyl domains of lipoate-dependent enzymes. Lipoyl-ACP can also act as a substrate although octanoyl-ACP is likely to be the physiological substrate. The protein is Octanoyltransferase of Prochlorococcus marinus subsp. pastoris (strain CCMP1986 / NIES-2087 / MED4).